The sequence spans 261 residues: tRNA pseudouridine synthase A (261 aa).

Residue aspartate 51 is the Nucleophile of the active site. Residue tyrosine 109 coordinates substrate.

This sequence belongs to the tRNA pseudouridine synthase TruA family. As to quaternary structure, homodimer.

The enzyme catalyses uridine(38/39/40) in tRNA = pseudouridine(38/39/40) in tRNA. In terms of biological role, formation of pseudouridine at positions 38, 39 and 40 in the anticodon stem and loop of transfer RNAs. This Tolumonas auensis (strain DSM 9187 / NBRC 110442 / TA 4) protein is tRNA pseudouridine synthase A.